Here is a 125-residue protein sequence, read N- to C-terminus: Small ribosomal subunit protein eS8 (125 aa).

The protein belongs to the eukaryotic ribosomal protein eS8 family. As to quaternary structure, part of the 30S ribosomal subunit.

The polypeptide is Small ribosomal subunit protein eS8 (Methanocella arvoryzae (strain DSM 22066 / NBRC 105507 / MRE50)).